Here is a 689-residue protein sequence, read N- to C-terminus: DNA ligase (689 aa).

NAD(+) contacts are provided by residues 40-44 (DSEYD), 89-90 (SL), and glutamate 121. The active-site N6-AMP-lysine intermediate is lysine 123. Residues arginine 144, glutamate 179, lysine 295, and lysine 319 each contribute to the NAD(+) site. Residues cysteine 413, cysteine 416, cysteine 431, and cysteine 437 each contribute to the Zn(2+) site. The region spanning 610–689 (REQSSLTDKI…EEWLTLIKNV (80 aa)) is the BRCT domain.

Belongs to the NAD-dependent DNA ligase family. LigA subfamily. Requires Mg(2+) as cofactor. The cofactor is Mn(2+).

The catalysed reaction is NAD(+) + (deoxyribonucleotide)n-3'-hydroxyl + 5'-phospho-(deoxyribonucleotide)m = (deoxyribonucleotide)n+m + AMP + beta-nicotinamide D-nucleotide.. Functionally, DNA ligase that catalyzes the formation of phosphodiester linkages between 5'-phosphoryl and 3'-hydroxyl groups in double-stranded DNA using NAD as a coenzyme and as the energy source for the reaction. It is essential for DNA replication and repair of damaged DNA. The chain is DNA ligase from Rickettsia africae (strain ESF-5).